We begin with the raw amino-acid sequence, 156 residues long: ATP synthase subunit b (156 aa).

Residues 1-21 (MSINATLLIQIIAFVLLIWFV) traverse the membrane as a helical segment.

It belongs to the ATPase B chain family. F-type ATPases have 2 components, F(1) - the catalytic core - and F(0) - the membrane proton channel. F(1) has five subunits: alpha(3), beta(3), gamma(1), delta(1), epsilon(1). F(0) has three main subunits: a(1), b(2) and c(10-14). The alpha and beta chains form an alternating ring which encloses part of the gamma chain. F(1) is attached to F(0) by a central stalk formed by the gamma and epsilon chains, while a peripheral stalk is formed by the delta and b chains.

It is found in the cell inner membrane. In terms of biological role, f(1)F(0) ATP synthase produces ATP from ADP in the presence of a proton or sodium gradient. F-type ATPases consist of two structural domains, F(1) containing the extramembraneous catalytic core and F(0) containing the membrane proton channel, linked together by a central stalk and a peripheral stalk. During catalysis, ATP synthesis in the catalytic domain of F(1) is coupled via a rotary mechanism of the central stalk subunits to proton translocation. Its function is as follows. Component of the F(0) channel, it forms part of the peripheral stalk, linking F(1) to F(0). The sequence is that of ATP synthase subunit b from Hydrogenovibrio crunogenus (strain DSM 25203 / XCL-2) (Thiomicrospira crunogena).